Reading from the N-terminus, the 3563-residue chain is D-lysergyl-peptide-synthetase subunit 1 (3563 aa).

Residues 307–706 (SCSPRPNPQA…LGRKDDQVKI (400 aa)) are adenylation (A) domain 1. In terms of domain architecture, Carrier 1 spans 844–921 (EPKSDREKLL…EIVIVSTSAT (78 aa)). Residue Ser-881 is modified to O-(pantetheine 4'-phosphoryl)serine. The interval 963 to 1354 (EDIYPCTHLQ…EHILTEIHSN (392 aa)) is condensation (C) domain 1. The segment at 1397–1804 (QEKCQAQPDA…RRKDAQVKIR (408 aa)) is adenylation (A) domain 2. A Carrier 2 domain is found at 1944–2020 (PPSNATEHEI…KLALARGVTQ (77 aa)). Ser-1981 is modified (O-(pantetheine 4'-phosphoryl)serine). The segment at 2067–2486 (ERIYPCSPIQ…ALPVLDEDQM (420 aa)) is condensation (C) domain 2. The adenylation (A) domain 3 stretch occupies residues 2511 to 2909 (QCIRCPDSPS…GRNDDQVKVR (399 aa)). The region spanning 3025-3104 (PPRTALEAEL…RFGSYRRAGA (80 aa)) is the Carrier 3 domain. An O-(pantetheine 4'-phosphoryl)serine modification is found at Ser-3064. The cyclization (Cyc) domain stretch occupies residues 3166 to 3451 (LYFSKPMASE…VAKSTTWSSD (286 aa)).

The protein belongs to the NRP synthetase family.

It participates in alkaloid biosynthesis; ergot alkaloid biosynthesis. In terms of biological role, D-lysergyl-peptide-synthetase subunit 1; part of the gene cluster that mediates the biosynthesis of fungal ergot alkaloid. DmaW catalyzes the first step of ergot alkaloid biosynthesis by condensing dimethylallyl diphosphate (DMAP) and tryptophan to form 4-dimethylallyl-L-tryptophan. The second step is catalyzed by the methyltransferase easF that methylates 4-dimethylallyl-L-tryptophan in the presence of S-adenosyl-L-methionine, resulting in the formation of 4-dimethylallyl-L-abrine. The catalase easC and the FAD-dependent oxidoreductase easE then transform 4-dimethylallyl-L-abrine to chanoclavine-I which is further oxidized by easD in the presence of NAD(+), resulting in the formation of chanoclavine-I aldehyde. Agroclavine dehydrogenase easG then mediates the conversion of chanoclavine-I aldehyde to agroclavine via a non-enzymatic adduct reaction: the substrate is an iminium intermediate that is formed spontaneously from chanoclavine-I aldehyde in the presence of glutathione. The presence of easA is not required to complete this reaction. Further conversion of agroclavine to paspalic acid is a two-step process involving oxidation of agroclavine to elymoclavine and of elymoclavine to paspalic acid, the second step being performed by the elymoclavine oxidase cloA. Paspalic acid is then further converted to D-lysergic acid. Ergopeptines are assembled from D-lysergic acid and three different amino acids by the D-lysergyl-peptide-synthetases composed each of a monomudular and a trimodular nonribosomal peptide synthetase subunit. LpsB and lpsC encode the monomodular subunits responsible for D-lysergic acid activation and incorporation into the ergopeptine backbone. LpsA1 and A2 subunits encode the trimodular nonribosomal peptide synthetase assembling the tripeptide portion of ergopeptines. LpsA1 is responsible for formation of the major ergopeptine, ergotamine, and lpsA2 for alpha-ergocryptine, the minor ergopeptine of the total alkaloid mixture elaborated by C.purpurea. D-lysergyl-tripeptides are assembled by the nonribosomal peptide synthetases and released as N-(D-lysergyl-aminoacyl)-lactams. Cyclolization of the D-lysergyl-tripeptides is performed by the Fe(2+)/2-ketoglutarate-dependent dioxygenase easH which introduces a hydroxyl group into N-(D-lysergyl-aminoacyl)-lactam at alpha-C of the aminoacyl residue followed by spontaneous condensation with the terminal lactam carbonyl group. The protein is D-lysergyl-peptide-synthetase subunit 1 of Claviceps purpurea (Ergot fungus).